The following is a 1183-amino-acid chain: DNA-directed RNA polymerase subunit beta (1183 aa).

Belongs to the RNA polymerase beta chain family. As to quaternary structure, the RNAP catalytic core consists of 2 alpha, 1 beta, 1 beta' and 1 omega subunit. When a sigma factor is associated with the core the holoenzyme is formed, which can initiate transcription.

The enzyme catalyses RNA(n) + a ribonucleoside 5'-triphosphate = RNA(n+1) + diphosphate. Its function is as follows. DNA-dependent RNA polymerase catalyzes the transcription of DNA into RNA using the four ribonucleoside triphosphates as substrates. The sequence is that of DNA-directed RNA polymerase subunit beta from Staphylococcus aureus (strain MRSA252).